Reading from the N-terminus, the 580-residue chain is 2-hydroxyacyl-CoA lyase 1 (580 aa).

Position 47 (glutamate 47) interacts with thiamine diphosphate. The tract at residues 413–494 (TMDIGRLCIP…FIVLNNNGVY (82 aa)) is thiamine pyrophosphate binding. Mg(2+) is bound by residues aspartate 463 and asparagine 490.

Belongs to the TPP enzyme family. As to quaternary structure, homotetramer. Mg(2+) is required as a cofactor. Thiamine diphosphate serves as cofactor.

The protein localises to the peroxisome. It carries out the reaction a 2-hydroxy-3-methyl fatty acyl-CoA = a 2-methyl-branched fatty aldehyde + formyl-CoA. The enzyme catalyses an (R)-2-hydroxy-long-chain-fatty acyl-CoA = a long-chain fatty aldehyde + formyl-CoA. It catalyses the reaction 2-hydroxy-3-methylhexadecanoyl-CoA = 2-methylpentadecanal + formyl-CoA. The catalysed reaction is 2-hydroxyoctadecanoyl-CoA = heptadecanal + formyl-CoA. In terms of biological role, peroxisomal 2-OH acyl-CoA lyase involved in the cleavage (C1 removal) reaction in the fatty acid alpha-oxydation in a thiamine pyrophosphate (TPP)-dependent manner. Involved in the degradation of 3-methyl-branched fatty acids and the shortening of 2-hydroxy long-chain fatty acids. The protein is 2-hydroxyacyl-CoA lyase 1 (hacl1) of Dictyostelium discoideum (Social amoeba).